We begin with the raw amino-acid sequence, 1174 residues long: Nucleolar complex protein 1 (1174 aa).

6 disordered regions span residues 1–20, 29–237, 715–742, 893–922, 944–1085, and 1116–1174; these read MPAA…NKKI, VVKQ…EESQ, YEDV…VKSS, AQNK…LKEG, GVDE…GGRS, and VKGQ…KRKH. Basic and acidic residues predominate over residues 33 to 63; it reads NKKEHPQRPKFEGKEQVKKPQKIKFGEDGKA. Residues 95 to 104 show a composition bias toward polar residues; it reads ASKSFNQNHK. Basic and acidic residues-rich tracts occupy residues 113-122 and 176-200; these read KFGEDREAVH and KFGD…EDGA. 2 stretches are compositionally biased toward acidic residues: residues 207–216 and 715–724; these read SDGDSDEELG and YEDVKDEADD. Composition is skewed to basic and acidic residues over residues 725–739 and 897–906; these read TKDS…DNDV and KQKEIKKDAA. Acidic residues-rich tracts occupy residues 907 to 916, 945 to 954, 981 to 1038, and 1048 to 1065; these read EEGDDGEAGE, VDEEQDEEEL, AEDE…DEGS, and DSSD…DDED. Positions 1127-1143 are enriched in basic and acidic residues; it reads NKDKSSDKQLKWEENRR. Over residues 1156 to 1166 the composition is skewed to low complexity; the sequence is GKPAAKGGRPQ.

This sequence belongs to the CBF/MAK21 family.

The protein resides in the nucleus. The protein localises to the nucleolus. Involved in rRNA processing and ribosome maturation. May also act as a transcription factor. The chain is Nucleolar complex protein 1 from Drosophila melanogaster (Fruit fly).